The sequence spans 98 residues: Putative pterin-4-alpha-carbinolamine dehydratase (98 aa).

It belongs to the pterin-4-alpha-carbinolamine dehydratase family.

The enzyme catalyses (4aS,6R)-4a-hydroxy-L-erythro-5,6,7,8-tetrahydrobiopterin = (6R)-L-erythro-6,7-dihydrobiopterin + H2O. In Chelativorans sp. (strain BNC1), this protein is Putative pterin-4-alpha-carbinolamine dehydratase.